A 461-amino-acid polypeptide reads, in one-letter code: Nuclear distribution protein PAC1 (461 aa).

Residues 9-41 (QAEELHKSIIAYLTANNLLDTANTLRAELNLNE) form the LisH domain. Residues 61–88 (TSVVRLQKKIMDLESRMSAMQAELDNAT) adopt a coiled-coil conformation. 8 WD repeats span residues 114-155 (SHRD…RTIK), 157-197 (HTRA…KNIR), 201-248 (GHDH…CLRT), 251-290 (GHTAWVRDVFPSPDGRFLLSTGDDSTARLWDISVSNPETK), 312-355 (QYLS…LLTL), 357-396 (GHDNWIRALAFHPGGKYLFSVSDDRTLRCWDLSQEGKCIK), 401-446 (AHER…IRCV), and 448-461 (ATGGVDMKLRIFAN).

The protein belongs to the WD repeat LIS1/nudF family. Self-associates. Interacts with NDL1 and dynein.

It is found in the cytoplasm. The protein resides in the cytoskeleton. It localises to the spindle pole. Functionally, positively regulates the activity of the minus-end directed microtubule motor protein dynein. May enhance dynein-mediated microtubule sliding by targeting dynein to the microtubule plus end. Required for nuclear migration during vegetative growth as well as development. Required for retrograde early endosome (EE) transport from the hyphal tip. Required for localization of dynein to the mitotic spindle poles. Recruits additional proteins to the dynein complex at SPBs. This chain is Nuclear distribution protein PAC1, found in Arthroderma benhamiae (strain ATCC MYA-4681 / CBS 112371) (Trichophyton mentagrophytes).